Consider the following 579-residue polypeptide: Arginine--tRNA ligase (579 aa).

The 'HIGH' region signature appears at 123–133 (PNLAKEMHVGH).

This sequence belongs to the class-I aminoacyl-tRNA synthetase family. In terms of assembly, monomer.

The protein localises to the cytoplasm. The enzyme catalyses tRNA(Arg) + L-arginine + ATP = L-arginyl-tRNA(Arg) + AMP + diphosphate. This chain is Arginine--tRNA ligase, found in Cellvibrio japonicus (strain Ueda107) (Pseudomonas fluorescens subsp. cellulosa).